The sequence spans 438 residues: 2-(3-amino-3-carboxypropyl)histidine synthase subunit 1 (438 aa).

The disordered stretch occupies residues 1-24 (MAALVVSETAEPGSRVGPGRGRIS). C110, C214, and C342 together coordinate [4Fe-4S] cluster. Residues 402–438 (LCQPASDKVQQGSRGGSPAPACESCNCADQKATSPAP) form a disordered region. S418 is modified (phosphoserine).

Belongs to the DPH1/DPH2 family. DPH1 subfamily. In terms of assembly, component of the 2-(3-amino-3-carboxypropyl)histidine synthase complex composed of DPH1, DPH2, DPH3 and a NADH-dependent reductase. Interacts with DPH2. Interacts with RBM8A. [4Fe-4S] cluster is required as a cofactor. Strongly expressed in kidney and liver. Moderately expressed in brain, skin and testis. Weakly expressed in heart, lung, small intestine, spleen, stomach and thymus.

Its subcellular location is the nucleus. It localises to the cytoplasm. It catalyses the reaction L-histidyl-[translation elongation factor 2] + S-adenosyl-L-methionine = 2-[(3S)-amino-3-carboxypropyl]-L-histidyl-[translation elongation factor 2] + S-methyl-5'-thioadenosine + H(+). It participates in protein modification; peptidyl-diphthamide biosynthesis. In terms of biological role, catalyzes the first step of diphthamide biosynthesis, a post-translational modification of histidine which occurs in elongation factor 2. DPH1 and DPH2 transfer a 3-amino-3-carboxypropyl (ACP) group from S-adenosyl-L-methionine (SAM) to a histidine residue, the reaction is assisted by a reduction system comprising DPH3 and a NADH-dependent reductase. Acts as a tumor suppressor. In Mus musculus (Mouse), this protein is 2-(3-amino-3-carboxypropyl)histidine synthase subunit 1.